The chain runs to 119 residues: Putative yippee-like protein Os10g0369500 (119 aa).

Residues 21 to 118 form the Yippee domain; it reads AVLKCRRCRV…LEKARMWKEA (98 aa). The Zn(2+) site is built by Cys-25, Cys-28, Cys-81, and Cys-84.

This sequence belongs to the yippee family.

In Oryza sativa subsp. japonica (Rice), this protein is Putative yippee-like protein Os10g0369500.